Here is a 1014-residue protein sequence, read N- to C-terminus: MICAL-like protein 2 (1014 aa).

Residues 1-107 (MAAIKALQEW…YVSQYYNYFH (107 aa)) form the Calponin-homology (CH) domain. The interval 1–261 (MAAIKALQEW…KLSNLASRQP (261 aa)) is forms an intramolecular interaction with the C-terminal coiled coil domain keeping the protein in a closed conformation. 3 positions are modified to phosphoserine: Ser-110, Ser-144, and Ser-154. Positions 114-181 (GMAGMKRPSS…PSPKAAPGTV (68 aa)) are disordered. An LIM zinc-binding domain is found at 187–249 (SICGVCGKHV…THHSSEAVSV (63 aa)). Ser-250 is modified (phosphoserine). The necessary and sufficient for interaction with actinins stretch occupies residues 262-394 (GGGIADTRPI…QGQAASKGVK (133 aa)). The tract at residues 262–810 (GGGIADTRPI…QDDQTRSCKE (549 aa)) is mediates targeting to the cell plasma membrane. Disordered stretches follow at residues 311–450 (LTPP…SRVP) and 609–780 (TLPK…RRKK). Over residues 332–355 (STVTTTSANSKATTHVTNSSPVGW) the composition is skewed to polar residues. Positions 356–368 (SSSAQSSTGTSGS) are enriched in low complexity. Residues 384–398 (PQGQAASKGVKTQLN) are compositionally biased toward polar residues. Composition is skewed to low complexity over residues 399 to 419 (SSTD…SSRT) and 438 to 447 (PASSSSSHAS). 2 stretches are compositionally biased toward polar residues: residues 624-633 (LSHSTTQAFS) and 646-656 (VGSTSWTSVSL). Basic and acidic residues-rich tracts occupy residues 701–711 (EGWRARLKPVD) and 720–737 (LEQK…DTPR). A compositionally biased stretch (polar residues) spans 747 to 758 (IHITLTPIQQKR). Thr-759 bears the Phosphothreonine mark. 2 positions are modified to phosphoserine: Ser-773 and Ser-837. A forms an intramolecular interaction with the N-terminal Calponin-homology and LIM zinc-binding domains-containing region keeping the protein in a closed conformation region spans residues 811-918 (KTATWGTRES…LMYKSKDQCL (108 aa)). The region spanning 838-985 (PVRLHPNYIS…EQEEDQMLES (148 aa)) is the bMERB domain. Positions 845 to 885 (YISQEELQRQLQDIERQLDALELRGVELEKRLRAAEGDASE) form a coiled coil. The interval 918 to 1014 (LEERQLDLQG…WSSKSKSGQT (97 aa)) is mediates interaction with RAB13 and is required for transition from the closed to the open conformation.

As to quaternary structure, interacts with RAB13 (GTP-bound form); competes with RAB8A and is involved in tight junctions assembly. Interacts with RAB8A; competes with RAB13 and is involved in E-cadherin endocytic recycling. Interacts with RAB8B. Interacts (preferentially in opened conformation) with ACTN1 and ACTN4; stimulated by RAB13 activation. Interacts (via calponin-homology (CH) domain) with the filamins FLNA, FLNB and FLNC (via actin-binding domain).

The protein localises to the cell membrane. The protein resides in the cell junction. It localises to the tight junction. Its subcellular location is the recycling endosome. It is found in the cell projection. The protein localises to the neuron projection. The protein resides in the cytoplasm. It localises to the cytoskeleton. Its function is as follows. Effector of small Rab GTPases which is involved in junctional complexes assembly through the regulation of cell adhesion molecules transport to the plasma membrane and actin cytoskeleton reorganization. Regulates the endocytic recycling of occludins, claudins and E-cadherin to the plasma membrane and may thereby regulate the establishment of tight junctions and adherens junctions. In parallel, may regulate actin cytoskeleton reorganization directly through interaction with F-actin or indirectly through actinins and filamins. Most probably involved in the processes of epithelial cell differentiation, cell spreading and neurite outgrowth. Undergoes liquid-liquid phase separation to form tubular recycling endosomes. Plays 2 sequential roles in the biogenesis of tubular recycling endosomes: first organizes phase separation and then the closed form formed by interaction with RAB8A promotes endosomal tubulation. This is MICAL-like protein 2 (Micall2) from Rattus norvegicus (Rat).